The sequence spans 347 residues: NADH-ubiquinone oxidoreductase chain 2 (347 aa).

11 helical membrane-spanning segments follow: residues 2–22, 25–45, 56–76, 96–116, 122–142, 149–169, 178–197, 202–219, 241–261, 278–298, and 323–343; these read SPYV…MTLI, HWLT…PLMT, AIKY…SAIF, FMMT…FWVP, IPLL…ISIF, LNMS…GWGG, ILAY…IMIY, ILNL…FMVL, MIII…TGFM, LAMM…RIIY, and ILPI…TPMF.

The protein belongs to the complex I subunit 2 family. In terms of assembly, core subunit of respiratory chain NADH dehydrogenase (Complex I) which is composed of 45 different subunits. Interacts with TMEM242.

Its subcellular location is the mitochondrion inner membrane. It carries out the reaction a ubiquinone + NADH + 5 H(+)(in) = a ubiquinol + NAD(+) + 4 H(+)(out). Its function is as follows. Core subunit of the mitochondrial membrane respiratory chain NADH dehydrogenase (Complex I) which catalyzes electron transfer from NADH through the respiratory chain, using ubiquinone as an electron acceptor. Essential for the catalytic activity and assembly of complex I. The sequence is that of NADH-ubiquinone oxidoreductase chain 2 from Metachirus nudicaudatus (Brown four-eyed opossum).